A 195-amino-acid polypeptide reads, in one-letter code: ATP-dependent Clp protease proteolytic subunit 2 (195 aa).

Ser-92 acts as the Nucleophile in catalysis. Residue His-117 is part of the active site.

It belongs to the peptidase S14 family. In terms of assembly, fourteen ClpP subunits assemble into 2 heptameric rings which stack back to back to give a disk-like structure with a central cavity, resembling the structure of eukaryotic proteasomes.

It localises to the cytoplasm. It catalyses the reaction Hydrolysis of proteins to small peptides in the presence of ATP and magnesium. alpha-casein is the usual test substrate. In the absence of ATP, only oligopeptides shorter than five residues are hydrolyzed (such as succinyl-Leu-Tyr-|-NHMec, and Leu-Tyr-Leu-|-Tyr-Trp, in which cleavage of the -Tyr-|-Leu- and -Tyr-|-Trp bonds also occurs).. In terms of biological role, cleaves peptides in various proteins in a process that requires ATP hydrolysis. Has a chymotrypsin-like activity. Plays a major role in the degradation of misfolded proteins. The sequence is that of ATP-dependent Clp protease proteolytic subunit 2 from Rhodococcus jostii (strain RHA1).